A 414-amino-acid polypeptide reads, in one-letter code: Histidine--tRNA ligase (414 aa).

This sequence belongs to the class-II aminoacyl-tRNA synthetase family. As to quaternary structure, homodimer.

It localises to the cytoplasm. It carries out the reaction tRNA(His) + L-histidine + ATP = L-histidyl-tRNA(His) + AMP + diphosphate + H(+). The chain is Histidine--tRNA ligase from Ehrlichia ruminantium (strain Welgevonden).